The sequence spans 326 residues: Biotin synthase (326 aa).

The Radical SAM core domain occupies 51–275 (NAVQRSTLLS…MMPTSFVRLS (225 aa)). Residues C66, C70, and C73 each coordinate [4Fe-4S] cluster. [2Fe-2S] cluster contacts are provided by C110, C141, C201, and R273.

Belongs to the radical SAM superfamily. Biotin synthase family. As to quaternary structure, homodimer. It depends on [4Fe-4S] cluster as a cofactor. [2Fe-2S] cluster serves as cofactor.

It catalyses the reaction (4R,5S)-dethiobiotin + (sulfur carrier)-SH + 2 reduced [2Fe-2S]-[ferredoxin] + 2 S-adenosyl-L-methionine = (sulfur carrier)-H + biotin + 2 5'-deoxyadenosine + 2 L-methionine + 2 oxidized [2Fe-2S]-[ferredoxin]. Its pathway is cofactor biosynthesis; biotin biosynthesis; biotin from 7,8-diaminononanoate: step 2/2. Functionally, catalyzes the conversion of dethiobiotin (DTB) to biotin by the insertion of a sulfur atom into dethiobiotin via a radical-based mechanism. This is Biotin synthase from Aromatoleum aromaticum (strain DSM 19018 / LMG 30748 / EbN1) (Azoarcus sp. (strain EbN1)).